The following is a 121-amino-acid chain: Holo-[acyl-carrier-protein] synthase (121 aa).

Mg(2+) contacts are provided by Asp6 and Glu55.

This sequence belongs to the P-Pant transferase superfamily. AcpS family. It depends on Mg(2+) as a cofactor.

It is found in the cytoplasm. The enzyme catalyses apo-[ACP] + CoA = holo-[ACP] + adenosine 3',5'-bisphosphate + H(+). In terms of biological role, transfers the 4'-phosphopantetheine moiety from coenzyme A to a Ser of acyl-carrier-protein. This is Holo-[acyl-carrier-protein] synthase from Chloroherpeton thalassium (strain ATCC 35110 / GB-78).